Reading from the N-terminus, the 401-residue chain is MTLPKIKHVRAWFIGGATAEKGAGGGDYHDQGGNHWIADHIATPMSKYRDYEQSRQSFGINVLGTLIVEVEAENGQTGFAVSTAGEMGCFIVEKHLNRFIEGKCVSDIKLIHDQMLGATMYYSGSGGLVMNTISCVDLALWDLFGKVVGLPVYKLLGGAVRDEIQFYATGARPDLAKEMGFIGGKMPTHWGPHDGDAGIRKDAAMVADMREKCGPDFWLMLDCWMSQDVNYATKLAHACAPFNLKWIEECLPPQQYEGYRELKRNAPAGMMVTSGEHHGTLQSFRTLSETGIDIMQPDVGWCGGLTTLVEIAALAKSRGQLVVPHGSSVYSHHAVITFTNTPFSEFLMTSPDCSTLRPQFDPILLDEPVPVNGRIHKSVLDKPGFGVELNRDCHLKRPYSH.

Substrate-binding residues include His29 and Arg55. Asp222, Glu248, and Glu276 together coordinate Mg(2+). Catalysis depends on His325, which acts as the Proton acceptor. Glu345 lines the substrate pocket.

Belongs to the mandelate racemase/muconate lactonizing enzyme family. RhamD subfamily. Homooctamer; tetramer of dimers. Mg(2+) serves as cofactor.

It catalyses the reaction L-rhamnonate = 2-dehydro-3-deoxy-L-rhamnonate + H2O. In terms of biological role, catalyzes the dehydration of L-rhamnonate to 2-keto-3-deoxy-L-rhamnonate (KDR). In Salmonella heidelberg (strain SL476), this protein is L-rhamnonate dehydratase.